The primary structure comprises 452 residues: MEVVILAAGQGKRMRSVLPKVLQPLAGKPMLSHVLDAARTLAARRICVVYGHGGEVVRERLDAADLAWARQEPQLGTGHAVQQALPHLTDGDLALVLYGDVPLIGVPTLQRLAAAAGDTRLALLTVELDNPTGYGRILRDAAGRVVRIVEEKDASDAERRVREVNTGILVAPVARLRAWLGSLRNDNAQGEYYLTDIIGMAVAEDIEVVTVQPDAVSETLGVNSKPQLAELERIHQRNIAQRLMEDGVTLIDPARIDVRGELVCGRDVEIDVNCVFEGRVELGDGVRIGANCVVRDARIGSGTRVAPFSHIEQTVMGPACVIGPYARTRPGTELGEDVHLGNFVEVKNSVIAAHSKANHLAYVGDADVGQRVNIGAGTITCNYDGANKFRTVIEDDVFIGSDTQLVAPVRVGRGATLGAGTTLTKDAPPEQLTVSRAKQLSIAGWKRPVKQR.

The pyrophosphorylase stretch occupies residues 1–225 (MEVVILAAGQ…VSETLGVNSK (225 aa)). Residues 6-9 (LAAG), Lys-20, Gln-71, 76-77 (GT), 98-100 (YGD), Gly-135, Glu-150, Asn-165, and Asn-223 contribute to the UDP-N-acetyl-alpha-D-glucosamine site. Residue Asp-100 coordinates Mg(2+). Asn-223 contacts Mg(2+). A linker region spans residues 226-246 (PQLAELERIHQRNIAQRLMED). An N-acetyltransferase region spans residues 247 to 452 (GVTLIDPARI…AGWKRPVKQR (206 aa)). The UDP-N-acetyl-alpha-D-glucosamine site is built by Arg-329 and Lys-347. His-359 serves as the catalytic Proton acceptor. The UDP-N-acetyl-alpha-D-glucosamine site is built by Tyr-362 and Asn-373. Residues Ala-376, 382–383 (NY), Ser-401, Ala-419, and Arg-436 contribute to the acetyl-CoA site.

In the N-terminal section; belongs to the N-acetylglucosamine-1-phosphate uridyltransferase family. It in the C-terminal section; belongs to the transferase hexapeptide repeat family. In terms of assembly, homotrimer. Mg(2+) serves as cofactor.

Its subcellular location is the cytoplasm. It carries out the reaction alpha-D-glucosamine 1-phosphate + acetyl-CoA = N-acetyl-alpha-D-glucosamine 1-phosphate + CoA + H(+). The enzyme catalyses N-acetyl-alpha-D-glucosamine 1-phosphate + UTP + H(+) = UDP-N-acetyl-alpha-D-glucosamine + diphosphate. Its pathway is nucleotide-sugar biosynthesis; UDP-N-acetyl-alpha-D-glucosamine biosynthesis; N-acetyl-alpha-D-glucosamine 1-phosphate from alpha-D-glucosamine 6-phosphate (route II): step 2/2. The protein operates within nucleotide-sugar biosynthesis; UDP-N-acetyl-alpha-D-glucosamine biosynthesis; UDP-N-acetyl-alpha-D-glucosamine from N-acetyl-alpha-D-glucosamine 1-phosphate: step 1/1. It functions in the pathway bacterial outer membrane biogenesis; LPS lipid A biosynthesis. Catalyzes the last two sequential reactions in the de novo biosynthetic pathway for UDP-N-acetylglucosamine (UDP-GlcNAc). The C-terminal domain catalyzes the transfer of acetyl group from acetyl coenzyme A to glucosamine-1-phosphate (GlcN-1-P) to produce N-acetylglucosamine-1-phosphate (GlcNAc-1-P), which is converted into UDP-GlcNAc by the transfer of uridine 5-monophosphate (from uridine 5-triphosphate), a reaction catalyzed by the N-terminal domain. This is Bifunctional protein GlmU from Azoarcus sp. (strain BH72).